A 407-amino-acid chain; its full sequence is Argininosuccinate synthase (407 aa).

ATP-binding positions include 16 to 24 (AYSGGLDTS) and alanine 44. Tyrosine 96 and serine 101 together coordinate L-citrulline. Glycine 126 lines the ATP pocket. Positions 128, 132, and 133 each coordinate L-aspartate. Asparagine 132 serves as a coordination point for L-citrulline. Arginine 136, serine 185, serine 194, glutamate 270, and tyrosine 282 together coordinate L-citrulline.

This sequence belongs to the argininosuccinate synthase family. Type 1 subfamily. As to quaternary structure, homotetramer.

The protein resides in the cytoplasm. It carries out the reaction L-citrulline + L-aspartate + ATP = 2-(N(omega)-L-arginino)succinate + AMP + diphosphate + H(+). The protein operates within amino-acid biosynthesis; L-arginine biosynthesis; L-arginine from L-ornithine and carbamoyl phosphate: step 2/3. In Shewanella loihica (strain ATCC BAA-1088 / PV-4), this protein is Argininosuccinate synthase.